A 386-amino-acid chain; its full sequence is Ribosomal RNA small subunit methyltransferase H (386 aa).

Residues 97 to 99, Asp-116, Tyr-143, Asp-167, and Gln-174 each bind S-adenosyl-L-methionine; that span reads GGH.

This sequence belongs to the methyltransferase superfamily. RsmH family.

Its subcellular location is the cytoplasm. The catalysed reaction is cytidine(1402) in 16S rRNA + S-adenosyl-L-methionine = N(4)-methylcytidine(1402) in 16S rRNA + S-adenosyl-L-homocysteine + H(+). In terms of biological role, specifically methylates the N4 position of cytidine in position 1402 (C1402) of 16S rRNA. This Mycobacterium avium (strain 104) protein is Ribosomal RNA small subunit methyltransferase H.